Here is a 261-residue protein sequence, read N- to C-terminus: Thiazole synthase (261 aa).

The active-site Schiff-base intermediate with DXP is Lys-101. 1-deoxy-D-xylulose 5-phosphate contacts are provided by residues Gly-162, 188 to 189 (AG), and 210 to 211 (NT).

The protein belongs to the ThiG family. Homotetramer. Forms heterodimers with either ThiH or ThiS.

It is found in the cytoplasm. It catalyses the reaction [ThiS sulfur-carrier protein]-C-terminal-Gly-aminoethanethioate + 2-iminoacetate + 1-deoxy-D-xylulose 5-phosphate = [ThiS sulfur-carrier protein]-C-terminal Gly-Gly + 2-[(2R,5Z)-2-carboxy-4-methylthiazol-5(2H)-ylidene]ethyl phosphate + 2 H2O + H(+). Its pathway is cofactor biosynthesis; thiamine diphosphate biosynthesis. In terms of biological role, catalyzes the rearrangement of 1-deoxy-D-xylulose 5-phosphate (DXP) to produce the thiazole phosphate moiety of thiamine. Sulfur is provided by the thiocarboxylate moiety of the carrier protein ThiS. In vitro, sulfur can be provided by H(2)S. The chain is Thiazole synthase from Azoarcus sp. (strain BH72).